We begin with the raw amino-acid sequence, 851 residues long: DNA mismatch repair protein MutS (851 aa).

Gly-602–Ser-609 contacts ATP.

It belongs to the DNA mismatch repair MutS family.

Functionally, this protein is involved in the repair of mismatches in DNA. It is possible that it carries out the mismatch recognition step. This protein has a weak ATPase activity. The sequence is that of DNA mismatch repair protein MutS from Streptococcus pyogenes serotype M3 (strain SSI-1).